Here is a 208-residue protein sequence, read N- to C-terminus: Probable nicotinate-nucleotide adenylyltransferase (208 aa).

This sequence belongs to the NadD family.

The catalysed reaction is nicotinate beta-D-ribonucleotide + ATP + H(+) = deamido-NAD(+) + diphosphate. It functions in the pathway cofactor biosynthesis; NAD(+) biosynthesis; deamido-NAD(+) from nicotinate D-ribonucleotide: step 1/1. Its function is as follows. Catalyzes the reversible adenylation of nicotinate mononucleotide (NaMN) to nicotinic acid adenine dinucleotide (NaAD). The chain is Probable nicotinate-nucleotide adenylyltransferase from Acidothermus cellulolyticus (strain ATCC 43068 / DSM 8971 / 11B).